Consider the following 130-residue polypeptide: uncharacterized protein (130 aa).

Residues 1–104 (MRPGSSPRAP…RGRWGLRGGP (104 aa)) are disordered. Positions 88-97 (RRQPGPQRGR) are enriched in low complexity.

This is an uncharacterized protein from Homo sapiens (Human).